The chain runs to 426 residues: GTPase HflX (426 aa).

The Hflx-type G domain occupies 198-365 (PTVSLVGYTN…ALTERLSGEV (168 aa)). GTP-binding positions include 204–211 (GYTNAGKS), 229–233 (FATLD), 251–254 (DTVG), 317–320 (NKID), and 343–345 (SAQ). Residues S211 and T231 each contribute to the Mg(2+) site.

The protein belongs to the TRAFAC class OBG-HflX-like GTPase superfamily. HflX GTPase family. Monomer. Associates with the 50S ribosomal subunit. This interaction occurs in the presence of GTP, GDP, ATP or ADP, but not in their absence. Mg(2+) serves as cofactor.

It is found in the cytoplasm. With respect to regulation, intrinsic GTPase activity is very slow and can be stimulated by the presence of 50S ribosomal subunits or 70S ribosomes. GTPase activity is inhibited by ATP. In terms of biological role, GTPase that associates with the 50S ribosomal subunit and may have a role during protein synthesis or ribosome biogenesis. In vitro, also exhibits ATPase activity. This chain is GTPase HflX, found in Escherichia coli (strain K12).